We begin with the raw amino-acid sequence, 570 residues long: Hydroxylamine reductase (570 aa).

4 residues coordinate [4Fe-4S] cluster: Cys5, Cys8, Cys17, and Cys23. Hybrid [4Fe-2O-2S] cluster is bound by residues His266, Glu290, Cys334, Cys425, Cys453, Cys478, Glu513, and Lys515. The residue at position 425 (Cys425) is a Cysteine persulfide.

The protein belongs to the HCP family. [4Fe-4S] cluster is required as a cofactor. Hybrid [4Fe-2O-2S] cluster serves as cofactor.

It localises to the cytoplasm. It carries out the reaction A + NH4(+) + H2O = hydroxylamine + AH2 + H(+). In terms of biological role, catalyzes the reduction of hydroxylamine to form NH(3) and H(2)O. The polypeptide is Hydroxylamine reductase (Clostridium botulinum (strain Kyoto / Type A2)).